We begin with the raw amino-acid sequence, 218 residues long: Pyridoxine/pyridoxamine 5'-phosphate oxidase (218 aa).

Substrate-binding positions include 14 to 17 (RREY) and Lys72. Residues 67–72 (RIVLLK), 82–83 (YT), Arg88, Lys89, and Gln111 contribute to the FMN site. Residues Tyr129, Arg133, and Ser137 each contribute to the substrate site. FMN contacts are provided by residues 146 to 147 (QS) and Trp191. 197-199 (RLH) provides a ligand contact to substrate. An FMN-binding site is contributed by Arg201.

It belongs to the pyridoxamine 5'-phosphate oxidase family. Homodimer. It depends on FMN as a cofactor.

It carries out the reaction pyridoxamine 5'-phosphate + O2 + H2O = pyridoxal 5'-phosphate + H2O2 + NH4(+). It catalyses the reaction pyridoxine 5'-phosphate + O2 = pyridoxal 5'-phosphate + H2O2. Its pathway is cofactor metabolism; pyridoxal 5'-phosphate salvage; pyridoxal 5'-phosphate from pyridoxamine 5'-phosphate: step 1/1. The protein operates within cofactor metabolism; pyridoxal 5'-phosphate salvage; pyridoxal 5'-phosphate from pyridoxine 5'-phosphate: step 1/1. Catalyzes the oxidation of either pyridoxine 5'-phosphate (PNP) or pyridoxamine 5'-phosphate (PMP) into pyridoxal 5'-phosphate (PLP). The sequence is that of Pyridoxine/pyridoxamine 5'-phosphate oxidase from Salmonella typhi.